The chain runs to 88 residues: Small ribosomal subunit protein bS18B (88 aa).

Belongs to the bacterial ribosomal protein bS18 family. In terms of assembly, part of the 30S ribosomal subunit. Forms a tight heterodimer with protein bS6.

Binds as a heterodimer with protein bS6 to the central domain of the 16S rRNA, where it helps stabilize the platform of the 30S subunit. This chain is Small ribosomal subunit protein bS18B, found in Roseiflexus castenholzii (strain DSM 13941 / HLO8).